We begin with the raw amino-acid sequence, 377 residues long: MAKRDYYEVLGVSKDASKDEIKKAYRKLSKKYHPDINQEEGAEEKFKEISEAYEVLSDENKRANYDQFGHDGPQGGFGGQGFGGGQDFGGFGGGFEDIFSSFFGGGAQRDPNVPRKGDDLQYTMTVTFEEAAFGTEKEISIRKQVKCETCDGSGAKPGSKKKTCHYCNGSGHVSVEQNTILGRVRTEKVCPVCNGTGEEIEEPCPTCHGKGTETKNVKIKVKVPEGVDNDQQIRLAGEGAPGHNGGPQGDLYVVFRVEPSDTFEREGDDIFYNLNVSFPQAALGDEIKVPTLKGHVMLSVPEGTQNGKQFRMKEKGIKNVHGYGYGDLFININVVTPTKLNDKQKSIMREFAEVSGEEITEQPTNFKERARRFFKGE.

Residues 5–69 (DYYEVLGVSK…NKRANYDQFG (65 aa)) form the J domain. The CR-type zinc finger occupies 134–216 (GTEKEISIRK…CHGKGTETKN (83 aa)). Zn(2+) contacts are provided by cysteine 147, cysteine 150, cysteine 164, cysteine 167, cysteine 190, cysteine 193, cysteine 204, and cysteine 207. CXXCXGXG motif repeat units lie at residues 147 to 154 (CETCDGSG), 164 to 171 (CHYCNGSG), 190 to 197 (CPVCNGTG), and 204 to 211 (CPTCHGKG).

Belongs to the DnaJ family. In terms of assembly, homodimer. Requires Zn(2+) as cofactor.

It localises to the cytoplasm. Functionally, participates actively in the response to hyperosmotic and heat shock by preventing the aggregation of stress-denatured proteins and by disaggregating proteins, also in an autonomous, DnaK-independent fashion. Unfolded proteins bind initially to DnaJ; upon interaction with the DnaJ-bound protein, DnaK hydrolyzes its bound ATP, resulting in the formation of a stable complex. GrpE releases ADP from DnaK; ATP binding to DnaK triggers the release of the substrate protein, thus completing the reaction cycle. Several rounds of ATP-dependent interactions between DnaJ, DnaK and GrpE are required for fully efficient folding. Also involved, together with DnaK and GrpE, in the DNA replication of plasmids through activation of initiation proteins. The chain is Chaperone protein DnaJ from Staphylococcus carnosus (strain TM300).